The sequence spans 271 residues: L-aspartate dehydrogenase (271 aa).

Ala124 and Asn192 together coordinate NAD(+). The active site involves His222.

The protein belongs to the L-aspartate dehydrogenase family.

The enzyme catalyses L-aspartate + NADP(+) + H2O = oxaloacetate + NH4(+) + NADPH + H(+). The catalysed reaction is L-aspartate + NAD(+) + H2O = oxaloacetate + NH4(+) + NADH + H(+). It participates in cofactor biosynthesis; NAD(+) biosynthesis; iminoaspartate from L-aspartate (dehydrogenase route): step 1/1. Its function is as follows. Specifically catalyzes the NAD or NADP-dependent dehydrogenation of L-aspartate to iminoaspartate. This chain is L-aspartate dehydrogenase, found in Methanosarcina mazei (strain ATCC BAA-159 / DSM 3647 / Goe1 / Go1 / JCM 11833 / OCM 88) (Methanosarcina frisia).